The following is a 360-amino-acid chain: Vomilenine reductase (360 aa).

The Enoyl reductase (ER) domain maps to 23 to 351; it reads GLLSPFNFSR…KADVKYRFVI (329 aa). C50 provides a ligand contact to Zn(2+). S52 lines the an alcohol pocket. S52 provides a ligand contact to NADP(+). Zn(2+) is bound by residues D53, H72, E73, C103, C106, C109, C117, and C166. H72 lines the an alcohol pocket. L192, G194, L195, S214, T215, S216, K219, K220, V277, A279, S301, and R348 together coordinate NADP(+).

This sequence belongs to the zinc-containing alcohol dehydrogenase family. Class-P subfamily. Homodimer. The cofactor is Zn(2+). Confined to roots.

It localises to the cytoplasm. It carries out the reaction (2R)-1,2-dihydrovomilenine + NADP(+) = vomilenine + NADPH + H(+). It participates in alkaloid biosynthesis; ajmaline biosynthesis. Its activity is regulated as follows. Inhibited by EDTA and p-hydroxymercuribenzoate, a sulfhydryl reagent. Alcohol dehydrogenase involved in the biosynthesis of ajmaline-type monoterpenoid indole alkaloids (MIAs) natural products, important plant-derived pharmaceuticals used in the therapy of heart disorders. Catalyzes the conversion of vomilenine to 1,2-dihydrovomilenine, an intermediate chemical in the biosynthesis of ajmaline. The chain is Vomilenine reductase from Rauvolfia serpentina (Serpentine wood).